Consider the following 690-residue polypeptide: Elongation factor G (690 aa).

Residues 8-283 (SRCRNIGIMA…AVVDFLPSPS (276 aa)) form the tr-type G domain. GTP contacts are provided by residues 17-24 (AHIDAGKT), 81-85 (DTPGH), and 135-138 (NKMD).

This sequence belongs to the TRAFAC class translation factor GTPase superfamily. Classic translation factor GTPase family. EF-G/EF-2 subfamily.

The protein localises to the cytoplasm. Functionally, catalyzes the GTP-dependent ribosomal translocation step during translation elongation. During this step, the ribosome changes from the pre-translocational (PRE) to the post-translocational (POST) state as the newly formed A-site-bound peptidyl-tRNA and P-site-bound deacylated tRNA move to the P and E sites, respectively. Catalyzes the coordinated movement of the two tRNA molecules, the mRNA and conformational changes in the ribosome. This is Elongation factor G from Anaplasma marginale (strain Florida).